Here is a 468-residue protein sequence, read N- to C-terminus: 3-isopropylmalate dehydratase large subunit (468 aa).

Positions 347, 408, and 411 each coordinate [4Fe-4S] cluster.

This sequence belongs to the aconitase/IPM isomerase family. LeuC type 1 subfamily. As to quaternary structure, heterodimer of LeuC and LeuD. [4Fe-4S] cluster is required as a cofactor.

It catalyses the reaction (2R,3S)-3-isopropylmalate = (2S)-2-isopropylmalate. The protein operates within amino-acid biosynthesis; L-leucine biosynthesis; L-leucine from 3-methyl-2-oxobutanoate: step 2/4. In terms of biological role, catalyzes the isomerization between 2-isopropylmalate and 3-isopropylmalate, via the formation of 2-isopropylmaleate. This chain is 3-isopropylmalate dehydratase large subunit, found in Janthinobacterium sp. (strain Marseille) (Minibacterium massiliensis).